We begin with the raw amino-acid sequence, 438 residues long: Metacaspase-1B (438 aa).

Residues 1–125 form a disordered region; it reads MYYHHSHQGW…SQHFGRGAPS (125 aa). A compositionally biased stretch (low complexity) spans 29-38; it reads PYPYSSNAQY. Pro residues predominate over residues 39-74; that stretch reads QPPPGPPPTSHYAPPPGPPPSHYYPPPGSYPSPAPS. Catalysis depends on residues H222 and C278.

This sequence belongs to the peptidase C14B family.

Its function is as follows. Involved in cell death (apoptosis). This Aspergillus niger (strain ATCC MYA-4892 / CBS 513.88 / FGSC A1513) protein is Metacaspase-1B (casB).